The sequence spans 235 residues: Protein fmp52-1, mitochondrial (235 aa).

A mitochondrion-targeting transit peptide spans 1–36 (MANTALIGCTGMVGSFILNNLLAHPSVARVDTISRR).

The protein belongs to the FMP52 family.

The protein resides in the mitochondrion outer membrane. The chain is Protein fmp52-1, mitochondrial (fmp521) from Aspergillus oryzae (strain ATCC 42149 / RIB 40) (Yellow koji mold).